Reading from the N-terminus, the 218-residue chain is Putative copper transporter crmD (218 aa).

2 helical membrane passes run 37-57 and 176-196; these read YSLT…LGVL and MLAV…GIVV.

It belongs to the copper transporter (Ctr) (TC 1.A.56) family. SLC31A subfamily.

Its subcellular location is the membrane. The enzyme catalyses Cu(2+)(in) = Cu(2+)(out). Its function is as follows. Putative copper transporter; part of the crm gene cluster that mediates the biosynthesis of a yet unidentified copper-responsive metabolite. Probably involved in the transport of copper, even if it does not act as a major copper transporter. In contrast to crmA, is not involved in the biosynthesis of fumivalines or fumicicolins. This is Putative copper transporter crmD from Aspergillus fumigatus (strain ATCC MYA-4609 / CBS 101355 / FGSC A1100 / Af293) (Neosartorya fumigata).